The following is a 210-amino-acid chain: Ribosomal RNA large subunit methyltransferase E (210 aa).

Residues glycine 67, tryptophan 69, aspartate 87, aspartate 103, and aspartate 128 each contribute to the S-adenosyl-L-methionine site. Catalysis depends on lysine 168, which acts as the Proton acceptor.

This sequence belongs to the class I-like SAM-binding methyltransferase superfamily. RNA methyltransferase RlmE family.

Its subcellular location is the cytoplasm. The enzyme catalyses uridine(2552) in 23S rRNA + S-adenosyl-L-methionine = 2'-O-methyluridine(2552) in 23S rRNA + S-adenosyl-L-homocysteine + H(+). Functionally, specifically methylates the uridine in position 2552 of 23S rRNA at the 2'-O position of the ribose in the fully assembled 50S ribosomal subunit. The protein is Ribosomal RNA large subunit methyltransferase E of Psychrobacter arcticus (strain DSM 17307 / VKM B-2377 / 273-4).